The chain runs to 404 residues: Biflaviolin synthase CYP158A2 (404 aa).

Flaviolin is bound by residues R288 and L293. Heme is bound at residue C353.

This sequence belongs to the cytochrome P450 family. The cofactor is heme.

The catalysed reaction is 2 flaviolin + 2 reduced [2Fe-2S]-[ferredoxin] + O2 + H(+) = 3,3'-biflaviolin + 2 oxidized [2Fe-2S]-[ferredoxin] + 2 H2O. It carries out the reaction 2 flaviolin + 2 reduced [2Fe-2S]-[ferredoxin] + O2 + H(+) = 3,8'-biflaviolin + 2 oxidized [2Fe-2S]-[ferredoxin] + 2 H2O. Its pathway is pigment biosynthesis. In terms of biological role, catalyzes oxidative C-C coupling reaction to polymerize flaviolin and form highly conjugated pigments which protect the soil bacterium from deleterious effects of UV irradiation (three isomers of biflaviolin and one triflaviolin). This is Biflaviolin synthase CYP158A2 from Streptomyces coelicolor (strain ATCC BAA-471 / A3(2) / M145).